Consider the following 444-residue polypeptide: Chromosome partition protein MukF (444 aa).

Residues 211–239 (LDETSGNLRELQDTLNAAGDKLQAQLLRI) are leucine-zipper.

This sequence belongs to the MukF family. Interacts, and probably forms a ternary complex, with MukE and MukB via its C-terminal region. The complex formation is stimulated by calcium or magnesium. It is required for an interaction between MukE and MukB.

The protein localises to the cytoplasm. Its subcellular location is the nucleoid. Functionally, involved in chromosome condensation, segregation and cell cycle progression. May participate in facilitating chromosome segregation by condensation DNA from both sides of a centrally located replisome during cell division. Not required for mini-F plasmid partitioning. Probably acts via its interaction with MukB and MukE. Overexpression results in anucleate cells. It has a calcium binding activity. In Actinobacillus succinogenes (strain ATCC 55618 / DSM 22257 / CCUG 43843 / 130Z), this protein is Chromosome partition protein MukF.